The primary structure comprises 648 residues: Acetyl-coenzyme A synthetase (648 aa).

CoA-binding positions include 191–194, T310, and N334; that span reads RGGR. ATP contacts are provided by residues 386–388, 410–415, D499, and R514; these read GEP and DTWWQT. S522 serves as a coordination point for CoA. R525 contributes to the ATP binding site. V536, H538, and I541 together coordinate Mg(2+). R583 lines the CoA pocket. K608 is modified (N6-acetyllysine).

It belongs to the ATP-dependent AMP-binding enzyme family. It depends on Mg(2+) as a cofactor. Acetylated. Deacetylation by the SIR2-homolog deacetylase activates the enzyme.

The enzyme catalyses acetate + ATP + CoA = acetyl-CoA + AMP + diphosphate. In terms of biological role, catalyzes the conversion of acetate into acetyl-CoA (AcCoA), an essential intermediate at the junction of anabolic and catabolic pathways. AcsA undergoes a two-step reaction. In the first half reaction, AcsA combines acetate with ATP to form acetyl-adenylate (AcAMP) intermediate. In the second half reaction, it can then transfer the acetyl group from AcAMP to the sulfhydryl group of CoA, forming the product AcCoA. The protein is Acetyl-coenzyme A synthetase of Aeromonas hydrophila subsp. hydrophila (strain ATCC 7966 / DSM 30187 / BCRC 13018 / CCUG 14551 / JCM 1027 / KCTC 2358 / NCIMB 9240 / NCTC 8049).